The following is a 207-amino-acid chain: Large ribosomal subunit protein uL4 (207 aa).

The interval 44-78 (MRQGTHKTKNRAEVSGGGRKPWRQKGTGRARQGSI) is disordered.

It belongs to the universal ribosomal protein uL4 family. In terms of assembly, part of the 50S ribosomal subunit.

Functionally, one of the primary rRNA binding proteins, this protein initially binds near the 5'-end of the 23S rRNA. It is important during the early stages of 50S assembly. It makes multiple contacts with different domains of the 23S rRNA in the assembled 50S subunit and ribosome. Forms part of the polypeptide exit tunnel. This chain is Large ribosomal subunit protein uL4, found in Geobacillus kaustophilus (strain HTA426).